We begin with the raw amino-acid sequence, 476 residues long: Exoglucanase-6A (476 aa).

The N-terminal stretch at 1-16 (MAKFFLTAAFAAAALA) is a signal peptide. Intrachain disulfides connect Cys-33–Cys-50 and Cys-44–Cys-60. The region spanning 33-60 (CGGIGFNGPTCCQSGSTCVKQNDWYSQC) is the CBM1 domain. Residues 67–94 (TTTSTTSTSSSSTTSRATSTTRTGGVTS) form a disordered region. Thr-144 is a glycosylation site (O-linked (Man...) threonine). Ser-153 is a glycosylation site (O-linked (Man...) serine). Substrate contacts are provided by Trp-163 and Asp-165. N-linked (GlcNAc...) asparagine glycosylation occurs at Asn-167. Positions 200 to 222 (YDLPDRDCAAAASNGEWAIANNG) are substrate binding loop 1. Asp-252 (proton donor) is an active-site residue. The substrate site is built by His-297, Trp-300, Asn-336, Trp-397, Lys-425, and Glu-429. Residues 423–461 (WVKPGGECDGTSDTTAARYDYHCGLEDALKPAPEAGQWF) are substrate binding loop 2. Asp-431 (proton acceptor) is an active-site residue.

Belongs to the glycosyl hydrolase 6 (cellulase A) family. As to quaternary structure, monomer.

The enzyme catalyses Hydrolysis of (1-&gt;4)-beta-D-glucosidic linkages in cellulose and cellotetraose, releasing cellobiose from the non-reducing ends of the chains.. In terms of biological role, plays a central role in the recycling of plant biomass. The biological conversion of cellulose to glucose generally requires three types of hydrolytic enzymes: (1) Endoglucanases which cut internal beta-1,4-glucosidic bonds; (2) Exocellobiohydrolases that cut the disaccharide cellobiose from the non-reducing end of the cellulose polymer chain; (3) Beta-1,4-glucosidases which hydrolyze the cellobiose and other short cello-oligosaccharides to glucose. The protein is Exoglucanase-6A of Humicola insolens (Soft-rot fungus).